The chain runs to 444 residues: Tryptophan 5-hydroxylase 1 (444 aa).

The region spanning 19-94 (SLIFSLKNEV…NVLSVNLPDN (76 aa)) is the ACT domain. Ser58 carries the phosphoserine; by PKA modification. Positions 235, 257, and 265 each coordinate L-tryptophan. 3 residues coordinate Fe cation: His272, His277, and Glu317. Ser336 and Ile366 together coordinate L-tryptophan.

It belongs to the biopterin-dependent aromatic amino acid hydroxylase family. As to quaternary structure, homotetramer. Interacts with DNAJC12. Fe(2+) is required as a cofactor. Post-translationally, ubiquitinated, leading to its degradation by the proteasome. Ubiquitinated is triggered by phosphorylation. In terms of processing, phosphorylated; triggering degradation by the proteasome. In terms of tissue distribution, seems to be less widely expressed than isoform 1.

It catalyses the reaction (6R)-L-erythro-5,6,7,8-tetrahydrobiopterin + L-tryptophan + O2 = 5-hydroxy-L-tryptophan + (4aS,6R)-4a-hydroxy-L-erythro-5,6,7,8-tetrahydrobiopterin. Its pathway is aromatic compound metabolism; serotonin biosynthesis; serotonin from L-tryptophan: step 1/2. Oxidizes L-tryptophan to 5-hydroxy-l-tryptophan in the rate-determining step of serotonin biosynthesis. The protein is Tryptophan 5-hydroxylase 1 (TPH1) of Homo sapiens (Human).